The following is a 131-amino-acid chain: UPF0102 protein YraN (131 aa).

Positions Met-1 to Thr-19 are enriched in polar residues. The disordered stretch occupies residues Met-1–Asp-21.

This sequence belongs to the UPF0102 family.

This chain is UPF0102 protein YraN, found in Escherichia coli (strain K12 / MC4100 / BW2952).